Consider the following 644-residue polypeptide: Ribonuclease R (644 aa).

The RNB domain occupies 211–529 (RINYSHIPFI…LHRLLKELLF (319 aa)). The S1 motif domain maps to 573-644 (LEFLEKEFLG…ITERIKEHVS (72 aa)).

The protein belongs to the RNR ribonuclease family. RNase R subfamily.

It localises to the cytoplasm. It carries out the reaction Exonucleolytic cleavage in the 3'- to 5'-direction to yield nucleoside 5'-phosphates.. Functionally, 3'-5' exoribonuclease that releases 5'-nucleoside monophosphates and is involved in maturation of structured RNAs. This Helicobacter pylori (strain J99 / ATCC 700824) (Campylobacter pylori J99) protein is Ribonuclease R.